A 720-amino-acid chain; its full sequence is Polyribonucleotide nucleotidyltransferase (720 aa).

Residues aspartate 484 and aspartate 490 each contribute to the Mg(2+) site. A KH domain is found at 551–610; sequence PRMYKISIDPSKIGSVIGSGGKTIRSIIEQTNTTVDIENDGTVVIGATDEASAQKAIKII. The S1 motif domain maps to 620–688; sequence GSVYTGKVTR…SQGRINLSRR (69 aa). The tract at residues 697–720 is disordered; the sequence is PISRNRDSQPRRSGPFRPQDRSNS.

This sequence belongs to the polyribonucleotide nucleotidyltransferase family. Mg(2+) is required as a cofactor.

The protein localises to the cytoplasm. The catalysed reaction is RNA(n+1) + phosphate = RNA(n) + a ribonucleoside 5'-diphosphate. Its function is as follows. Involved in mRNA degradation. Catalyzes the phosphorolysis of single-stranded polyribonucleotides processively in the 3'- to 5'-direction. In Dehalococcoides mccartyi (strain ATCC BAA-2266 / KCTC 15142 / 195) (Dehalococcoides ethenogenes (strain 195)), this protein is Polyribonucleotide nucleotidyltransferase.